We begin with the raw amino-acid sequence, 300 residues long: Ribonuclease HIII (300 aa).

The region spanning 86–300 is the RNase H type-2 domain; sequence RSRIGVDESG…FNEVLGSGNQ (215 aa). A divalent metal cation contacts are provided by Asp92, Glu93, and Asp196.

Belongs to the RNase HII family. RnhC subfamily. Mn(2+) serves as cofactor. Mg(2+) is required as a cofactor.

Its subcellular location is the cytoplasm. The catalysed reaction is Endonucleolytic cleavage to 5'-phosphomonoester.. Endonuclease that specifically degrades the RNA of RNA-DNA hybrids. The protein is Ribonuclease HIII of Chlamydia trachomatis serovar L2 (strain ATCC VR-902B / DSM 19102 / 434/Bu).